A 318-amino-acid polypeptide reads, in one-letter code: MTVKPELNEITPYLQFNRQQWGNFRKDTPLTLTESDLDKLQGQIEIVSLKEVTEIYLPLSRLLSFYVTARQTLQQATYQFLGKPEPKVPYIIGIAGSVAVGKSTTSRVLKALLSRWPDHPNVEVITTDGFLYSNAKLEKQGLMKRKGFPESYDMPSLLRVLNAIKSGQRNVRIPVYSHHYYDIVRGQYEIVDQPDIVILEGLNILQTGVRKTLQQLQVFVSDFFDFSLFVDAQAQVIQKWYIDRVLSFWRTTFKDPHSYFHYLTQMSETEVAAFAKHVWNEINKVNLMENILPYKNRAQLILEKAADHSIQKVYLRKI.

96-103 (GSVAVGKS) contacts ATP.

It belongs to the prokaryotic pantothenate kinase family.

The protein resides in the cytoplasm. It catalyses the reaction (R)-pantothenate + ATP = (R)-4'-phosphopantothenate + ADP + H(+). It participates in cofactor biosynthesis; coenzyme A biosynthesis; CoA from (R)-pantothenate: step 1/5. In Coxiella burnetii (strain RSA 493 / Nine Mile phase I), this protein is Pantothenate kinase.